Reading from the N-terminus, the 121-residue chain is UPF0102 protein Dhaf_3740 (121 aa).

It belongs to the UPF0102 family.

This Desulfitobacterium hafniense (strain DSM 10664 / DCB-2) protein is UPF0102 protein Dhaf_3740.